We begin with the raw amino-acid sequence, 194 residues long: Adapter protein MecA 2 (194 aa).

Belongs to the MecA family. In terms of assembly, homodimer.

Enables the recognition and targeting of unfolded and aggregated proteins to the ClpC protease or to other proteins involved in proteolysis. Also involved in Spx degradation by ClpC. Acts negatively in the development of competence by binding ComK and recruiting it to the ClpCP protease. When overexpressed, inhibits sporulation. In Bacillus subtilis (strain 168), this protein is Adapter protein MecA 2 (mecB).